We begin with the raw amino-acid sequence, 541 residues long: Calcium-dependent protein kinase 9 (541 aa).

The segment at 1 to 75 is disordered; the sequence is MGNCFAKNHG…PGLSPKTTTK (75 aa). G2 is lipidated: N-myristoyl glycine. The span at 14-54 shows a compositional bias: polar residues; sequence PQQNGNTTRSVEVGVTNQDPPSYTPQARTTQQPEKPGSVNS. S69 is subject to Phosphoserine. One can recognise a Protein kinase domain in the interval 91 to 349; the sequence is YTLGKELGRG…AADVLQHPWL (259 aa). ATP is bound by residues 97-105 and K120; that span reads LGRGQFGVT. Residue D215 is the Proton acceptor of the active site. Phosphoserine is present on S255. The interval 355 to 385 is autoinhibitory domain; that stretch reads ASDKPIDSAVLSRMKQFRAMNKLKKLALKVI. EF-hand domains follow at residues 392–427, 428–463, 464–499, and 500–534; these read EEIQGLKAMFANIDTDNSGTITYEELKEGLAKLGSK, LTEAEVKQLMDAADVDGNGSIDYIEFITATMHRHRL, ESNENLYKAFQHFDKDSSGYITIDELESALKEYGMG, and DDATIKEVLSDVDSDNDGRINYEEFCAMMRSGNPQ. Ca(2+) contacts are provided by D405, D407, S409, T411, E416, D441, D443, N445, S447, E452, D477, D479, S481, Y483, E488, D512, D514, D516, R518, and E523.

Belongs to the protein kinase superfamily. Ser/Thr protein kinase family. CDPK subfamily.

The protein resides in the cell membrane. The enzyme catalyses L-seryl-[protein] + ATP = O-phospho-L-seryl-[protein] + ADP + H(+). It carries out the reaction L-threonyl-[protein] + ATP = O-phospho-L-threonyl-[protein] + ADP + H(+). With respect to regulation, activated by calcium. Autophosphorylation may play an important role in the regulation of the kinase activity. Functionally, may play a role in signal transduction pathways that involve calcium as a second messenger. This chain is Calcium-dependent protein kinase 9 (CPK9), found in Arabidopsis thaliana (Mouse-ear cress).